Consider the following 78-residue polypeptide: Large ribosomal subunit protein bL28 (78 aa).

Belongs to the bacterial ribosomal protein bL28 family.

The polypeptide is Large ribosomal subunit protein bL28 (Rippkaea orientalis (strain PCC 8801 / RF-1) (Cyanothece sp. (strain PCC 8801))).